The sequence spans 1393 residues: ABC transporter G family member 3 (1393 aa).

Basic and acidic residues predominate over residues 1 to 14; the sequence is MEDKNNIELQEKAP. Residues 1 to 68 are disordered; that stretch reads MEDKNNIELQ…IIYQNPTPAS (68 aa). Residues 15 to 50 are compositionally biased toward low complexity; the sequence is DNYNNNNNNNNNNNNNNNNNNNNNNNNNNNNNNDIN. One can recognise an ABC transporter 1 domain in the interval 100–353; that stretch reads VSANNISYYI…YFSSIGLAPL (254 aa). Position 144-151 (144-151) interacts with ATP; it reads GIPGAGKS. One can recognise an ABC transmembrane type-2 1 domain in the interval 473–698; sequence MQYAVRFFQA…SYADGGYQGN (226 aa). 7 helical membrane passes run 479 to 499, 509 to 529, 558 to 578, 585 to 605, 615 to 635, 640 to 660, and 724 to 744; these read FFQAIFMGCVIGSLFVKMGFT, LVYFAMVLHIWTTIGSVEEFF, IPISLIEAILFSSCCYWIAGF, FIVFILGMALTNLIAQGIFQV, LASLICPAIVVLFMIMSGYMI, IPGWWIWLNALSPLRYVIDMV, and VDIVIILGFVCTFFFIFFLGV. Residues 783–1035 form the ABC transporter 2 domain; sequence MTFQNLNYVV…VIQHFTSAGY (253 aa). Residue 828–835 coordinates ATP; sequence GPSGAGKS. An ABC transmembrane type-2 2 domain is found at 1121–1388; it reads QTILLRFLRS…FLGYLALRFI (268 aa). 6 helical membrane passes run 1122-1142, 1157-1177, 1206-1226, 1235-1255, 1265-1285, and 1364-1384; these read TILLRFLRSFIPAIVIGTLFL, LVFLGFLFGGMASIGKVPTIV, LPMMVLTAFSYWIPMFFLTGL, FFFSLSVYLLVIMCYDSLATL, IAILVSGVGLNFLGLFGGFFI, and FYNLIILGGYFCAYTFLGYLA.

The protein belongs to the ABC transporter superfamily. ABCG family. PDR (TC 3.A.1.205) subfamily.

It is found in the membrane. The sequence is that of ABC transporter G family member 3 (abcG3) from Dictyostelium discoideum (Social amoeba).